We begin with the raw amino-acid sequence, 213 residues long: Chloramphenicol acetyltransferase 2 (213 aa).

H189 serves as the catalytic Proton acceptor.

The protein belongs to the chloramphenicol acetyltransferase family. As to quaternary structure, homotrimer.

It carries out the reaction chloramphenicol + acetyl-CoA = chloramphenicol 3-acetate + CoA. Its function is as follows. This enzyme is an effector of chloramphenicol resistance in bacteria. This is Chloramphenicol acetyltransferase 2 (cmlA) from Escherichia coli.